The sequence spans 402 residues: Putative polyketide beta-ketoacyl synthase 2 (402 aa).

Disordered regions lie at residues 1-30 and 188-222; these read MTPV…WAPR and VEPR…FDRD. The Ketosynthase family 3 (KS3) domain maps to 1 to 400; it reads MTPVAVTGMG…GFNSALVVRA (400 aa). Over residues 192–205 the composition is skewed to low complexity; sequence SAPGAGSPSSPAGG.

Belongs to the thiolase-like superfamily. Beta-ketoacyl-ACP synthases family.

Its pathway is antifungal biosynthesis; monensin biosynthesis. This chain is Putative polyketide beta-ketoacyl synthase 2, found in Streptomyces virginiae (Streptomyces cinnamonensis).